Consider the following 339-residue polypeptide: Anthranilate phosphoribosyltransferase (339 aa).

Residues glycine 79, 82 to 83, serine 87, 89 to 92, 107 to 115, and alanine 119 each bind 5-phospho-alpha-D-ribose 1-diphosphate; these read GD, NIST, and KHGNRAASS. An anthranilate-binding site is contributed by glycine 79. Serine 91 serves as a coordination point for Mg(2+). Asparagine 110 provides a ligand contact to anthranilate. Anthranilate is bound at residue arginine 165. Mg(2+) contacts are provided by aspartate 224 and glutamate 225.

The protein belongs to the anthranilate phosphoribosyltransferase family. Homodimer. It depends on Mg(2+) as a cofactor.

It carries out the reaction N-(5-phospho-beta-D-ribosyl)anthranilate + diphosphate = 5-phospho-alpha-D-ribose 1-diphosphate + anthranilate. Its pathway is amino-acid biosynthesis; L-tryptophan biosynthesis; L-tryptophan from chorismate: step 2/5. Catalyzes the transfer of the phosphoribosyl group of 5-phosphorylribose-1-pyrophosphate (PRPP) to anthranilate to yield N-(5'-phosphoribosyl)-anthranilate (PRA). In Lactiplantibacillus plantarum (strain ATCC BAA-793 / NCIMB 8826 / WCFS1) (Lactobacillus plantarum), this protein is Anthranilate phosphoribosyltransferase.